We begin with the raw amino-acid sequence, 327 residues long: D-threonate 4-phosphate dehydrogenase (327 aa).

The substrate site is built by His139 and Thr140. The a divalent metal cation site is built by His169, His213, and His268. Residues Lys276, Asn285, and Arg294 each contribute to the substrate site.

It belongs to the PdxA family. PdxA2 subfamily. Homodimer. A divalent metal cation is required as a cofactor.

It carries out the reaction 4-O-phospho-D-threonate + NAD(+) = dihydroxyacetone phosphate + CO2 + NADH. Its function is as follows. Catalyzes the NAD-dependent oxidation and subsequent decarboxylation of D-threonate 4-phosphate to produce dihydroxyacetone phosphate (DHAP). Can also use 4-hydroxy-L-threonine 4-phosphate as substrate. The protein is D-threonate 4-phosphate dehydrogenase of Salmonella typhimurium (strain LT2 / SGSC1412 / ATCC 700720).